The following is a 242-amino-acid chain: Uridylate kinase (242 aa).

Residue 15–18 (KLSG) participates in ATP binding. An involved in allosteric activation by GTP region spans residues 23–28 (GDEGFG). Glycine 57 lines the UMP pocket. Residues glycine 58 and arginine 62 each contribute to the ATP site. UMP-binding positions include aspartate 77 and 138-145 (TGNPFCTT). ATP-binding residues include threonine 165, tyrosine 171, and aspartate 174.

Belongs to the UMP kinase family. Homohexamer.

It localises to the cytoplasm. The catalysed reaction is UMP + ATP = UDP + ADP. It participates in pyrimidine metabolism; CTP biosynthesis via de novo pathway; UDP from UMP (UMPK route): step 1/1. With respect to regulation, allosterically activated by GTP. Inhibited by UTP. Functionally, catalyzes the reversible phosphorylation of UMP to UDP. This is Uridylate kinase from Shewanella sp. (strain ANA-3).